Reading from the N-terminus, the 586-residue chain is Adenine deaminase (586 aa).

It belongs to the metallo-dependent hydrolases superfamily. Adenine deaminase family. It depends on Mn(2+) as a cofactor.

The catalysed reaction is adenine + H2O + H(+) = hypoxanthine + NH4(+). The polypeptide is Adenine deaminase (Bdellovibrio bacteriovorus (strain ATCC 15356 / DSM 50701 / NCIMB 9529 / HD100)).